Reading from the N-terminus, the 506-residue chain is Carboxyl-terminal PDZ ligand of neuronal nitric oxide synthase protein (506 aa).

The region spanning 26–196 (FQHGICFEAK…ESERNSNSSG (171 aa)) is the PID domain. Disordered regions lie at residues 175-224 (HTQQ…VEVP) and 241-260 (DAVG…HPQE). Residues Ser-188, Ser-192, and Ser-195 each carry the phosphoserine modification. Residues 203–213 (TGAERASTATA) are compositionally biased toward low complexity. Position 266 is a phosphoserine (Ser-266). A coiled-coil region spans residues 322 to 363 (AAEAAARLEAQARVHQLLLQNKDMLQHISLLVKQVQELELKL). A phosphoserine mark is found at Ser-371, Ser-374, Ser-401, and Ser-417. Residues 494-506 (QELGDGLDDEIAV) form an interaction with NOS1 region. The PDZ-binding signature appears at 504–506 (IAV).

In terms of assembly, interacts with the PDZ domain of NOS1 or the second PDZ domain of DLG4 through its C-terminus. Interacts with RASD1 and SYN1, SYN2 and SYN3 via its PID domain. Forms a ternary complex with NOS1 and RASD1. Forms a ternary complex with NOS1 and SYN1. As to expression, expressed in kidney glomeruli podocytes.

It is found in the cell projection. The protein localises to the filopodium. The protein resides in the podosome. Its function is as follows. Adapter protein involved in neuronal nitric-oxide (NO) synthesis regulation via its association with nNOS/NOS1. The complex formed with NOS1 and synapsins is necessary for specific NO and synapsin functions at a presynaptic level. Mediates an indirect interaction between NOS1 and RASD1 leading to enhance the ability of NOS1 to activate RASD1. Competes with DLG4 for interaction with NOS1, possibly affecting NOS1 activity by regulating the interaction between NOS1 and DLG4. In kidney podocytes, plays a role in podosomes and filopodia formation through CDC42 activation. The sequence is that of Carboxyl-terminal PDZ ligand of neuronal nitric oxide synthase protein from Homo sapiens (Human).